We begin with the raw amino-acid sequence, 757 residues long: uncharacterized protein (757 aa).

This is an uncharacterized protein from Dictyostelium discoideum (Social amoeba).